Consider the following 383-residue polypeptide: Dual-specificity RNA methyltransferase RlmN (383 aa).

Glu-95 (proton acceptor) is an active-site residue. The Radical SAM core domain occupies 101–349; it reads EETRGTLCVS…TTVRKTRGDD (249 aa). A disulfide bridge connects residues Cys-108 and Cys-354. [4Fe-4S] cluster is bound by residues Cys-115, Cys-119, and Cys-122. S-adenosyl-L-methionine-binding positions include 180–181, Ser-212, 234–236, and Asn-311; these read GE and SLH. The active-site S-methylcysteine intermediate is Cys-354.

This sequence belongs to the radical SAM superfamily. RlmN family. [4Fe-4S] cluster serves as cofactor.

Its subcellular location is the cytoplasm. The catalysed reaction is adenosine(2503) in 23S rRNA + 2 reduced [2Fe-2S]-[ferredoxin] + 2 S-adenosyl-L-methionine = 2-methyladenosine(2503) in 23S rRNA + 5'-deoxyadenosine + L-methionine + 2 oxidized [2Fe-2S]-[ferredoxin] + S-adenosyl-L-homocysteine. It carries out the reaction adenosine(37) in tRNA + 2 reduced [2Fe-2S]-[ferredoxin] + 2 S-adenosyl-L-methionine = 2-methyladenosine(37) in tRNA + 5'-deoxyadenosine + L-methionine + 2 oxidized [2Fe-2S]-[ferredoxin] + S-adenosyl-L-homocysteine. Its function is as follows. Specifically methylates position 2 of adenine 2503 in 23S rRNA and position 2 of adenine 37 in tRNAs. m2A2503 modification seems to play a crucial role in the proofreading step occurring at the peptidyl transferase center and thus would serve to optimize ribosomal fidelity. This is Dual-specificity RNA methyltransferase RlmN from Paraburkholderia phytofirmans (strain DSM 17436 / LMG 22146 / PsJN) (Burkholderia phytofirmans).